Consider the following 159-residue polypeptide: Transcriptional repressor NrdR (159 aa).

A zinc finger spans residues 3 to 34 (CPTCQNTDSRVLESRSADTGKSVRRRRECLNC). Positions 49–139 (ISVLKKDGSR…VYRKFNGVKD (91 aa)) constitute an ATP-cone domain.

It belongs to the NrdR family. Zn(2+) serves as cofactor.

Negatively regulates transcription of bacterial ribonucleotide reductase nrd genes and operons by binding to NrdR-boxes. This chain is Transcriptional repressor NrdR, found in Prochlorococcus marinus (strain MIT 9515).